The primary structure comprises 70 residues: Putative peptide YY-3 (70 aa).

The signal sequence occupies residues 1-23 (MVSVCRPWPAVAIALLALLVCLG).

The protein belongs to the NPY family.

It localises to the secreted. This Homo sapiens (Human) protein is Putative peptide YY-3 (PYY3).